The following is a 510-amino-acid chain: Maturase K (510 aa).

This sequence belongs to the intron maturase 2 family. MatK subfamily.

It is found in the plastid. In terms of biological role, usually encoded in the trnK tRNA gene intron. Probably assists in splicing its own and other chloroplast group II introns. This chain is Maturase K, found in Bartsia alpina (Velvet bells).